The chain runs to 75 residues: ATP synthase subunit c (75 aa).

The next 2 helical transmembrane spans lie at 4–24 and 54–74; these read GLIA…GLGQ and AVAE…MFAF.

The protein belongs to the ATPase C chain family. F-type ATPases have 2 components, F(1) - the catalytic core - and F(0) - the membrane proton channel. F(1) has five subunits: alpha(3), beta(3), gamma(1), delta(1), epsilon(1). F(0) has three main subunits: a(1), b(2) and c(10-14). The alpha and beta chains form an alternating ring which encloses part of the gamma chain. F(1) is attached to F(0) by a central stalk formed by the gamma and epsilon chains, while a peripheral stalk is formed by the delta and b chains.

It is found in the cell membrane. Its function is as follows. F(1)F(0) ATP synthase produces ATP from ADP in the presence of a proton or sodium gradient. F-type ATPases consist of two structural domains, F(1) containing the extramembraneous catalytic core and F(0) containing the membrane proton channel, linked together by a central stalk and a peripheral stalk. During catalysis, ATP synthesis in the catalytic domain of F(1) is coupled via a rotary mechanism of the central stalk subunits to proton translocation. Key component of the F(0) channel; it plays a direct role in translocation across the membrane. A homomeric c-ring of between 10-14 subunits forms the central stalk rotor element with the F(1) delta and epsilon subunits. This Mycoplasmopsis agalactiae (strain NCTC 10123 / CIP 59.7 / PG2) (Mycoplasma agalactiae) protein is ATP synthase subunit c.